Here is a 276-residue protein sequence, read N- to C-terminus: MSNKHGHQARKRFGQNFLHDPGVIERIVRAINPKPEDSIVEIGPGLGAITEEILAINPRLQVVELDRDLIPVLRTKFFNYPEFRIHEADALSFDFSQLVSDRPLRIVGNLPYNISTPLIFHLLSQSGVVQDMHFMLQKEVVQRLAAVPGDNNYGRLGIMAQYFCKVQPLFEVGPGAFRPAPKVDSAIVRLVPHKELPYPAKDLKTLQAVVRTAFNARRKTLRKALAAMVTVEQLQSLGINDGLRPENLGLADYVRIADLLADTGKLQADDNEVSDD.

Residues N16, L18, G43, E64, D89, and N109 each contribute to the S-adenosyl-L-methionine site.

The protein belongs to the class I-like SAM-binding methyltransferase superfamily. rRNA adenine N(6)-methyltransferase family. RsmA subfamily.

Its subcellular location is the cytoplasm. The catalysed reaction is adenosine(1518)/adenosine(1519) in 16S rRNA + 4 S-adenosyl-L-methionine = N(6)-dimethyladenosine(1518)/N(6)-dimethyladenosine(1519) in 16S rRNA + 4 S-adenosyl-L-homocysteine + 4 H(+). Its function is as follows. Specifically dimethylates two adjacent adenosines (A1518 and A1519) in the loop of a conserved hairpin near the 3'-end of 16S rRNA in the 30S particle. May play a critical role in biogenesis of 30S subunits. The chain is Ribosomal RNA small subunit methyltransferase A from Marinobacter nauticus (strain ATCC 700491 / DSM 11845 / VT8) (Marinobacter aquaeolei).